The chain runs to 332 residues: Protoheme IX farnesyltransferase (332 aa).

Transmembrane regions (helical) follow at residues 63 to 83 (LICT…LNCL), 109 to 129 (TVFL…ISGV), 132 to 152 (LAAG…TIIL), 160 to 180 (IVFG…AATG), 188 to 208 (WLFS…AILL), 245 to 265 (ILGV…LLPF), and 286 to 306 (AKGL…LLLI).

Belongs to the UbiA prenyltransferase family. Protoheme IX farnesyltransferase subfamily.

The protein localises to the cell inner membrane. It carries out the reaction heme b + (2E,6E)-farnesyl diphosphate + H2O = Fe(II)-heme o + diphosphate. It functions in the pathway porphyrin-containing compound metabolism; heme O biosynthesis; heme O from protoheme: step 1/1. Converts heme B (protoheme IX) to heme O by substitution of the vinyl group on carbon 2 of heme B porphyrin ring with a hydroxyethyl farnesyl side group. The chain is Protoheme IX farnesyltransferase from Prochlorococcus marinus subsp. pastoris (strain CCMP1986 / NIES-2087 / MED4).